Consider the following 488-residue polypeptide: Glutamyl-tRNA(Gln) amidotransferase subunit A (488 aa).

Catalysis depends on charge relay system residues K77 and S152. S176 functions as the Acyl-ester intermediate in the catalytic mechanism.

The protein belongs to the amidase family. GatA subfamily. Heterotrimer of A, B and C subunits.

It carries out the reaction L-glutamyl-tRNA(Gln) + L-glutamine + ATP + H2O = L-glutaminyl-tRNA(Gln) + L-glutamate + ADP + phosphate + H(+). In terms of biological role, allows the formation of correctly charged Gln-tRNA(Gln) through the transamidation of misacylated Glu-tRNA(Gln) in organisms which lack glutaminyl-tRNA synthetase. The reaction takes place in the presence of glutamine and ATP through an activated gamma-phospho-Glu-tRNA(Gln). The chain is Glutamyl-tRNA(Gln) amidotransferase subunit A from Streptococcus pyogenes serotype M4 (strain MGAS10750).